The following is a 436-amino-acid chain: Histidinol dehydrogenase (436 aa).

The substrate site is built by Ser-237, Gln-259, and His-262. Positions 259 and 262 each coordinate Zn(2+). Residues Glu-327 and His-328 each act as proton acceptor in the active site. The substrate site is built by His-328, Asp-361, Glu-415, and His-420. Position 361 (Asp-361) interacts with Zn(2+). His-420 provides a ligand contact to Zn(2+).

This sequence belongs to the histidinol dehydrogenase family. Requires Zn(2+) as cofactor.

It catalyses the reaction L-histidinol + 2 NAD(+) + H2O = L-histidine + 2 NADH + 3 H(+). It participates in amino-acid biosynthesis; L-histidine biosynthesis; L-histidine from 5-phospho-alpha-D-ribose 1-diphosphate: step 9/9. Catalyzes the sequential NAD-dependent oxidations of L-histidinol to L-histidinaldehyde and then to L-histidine. The polypeptide is Histidinol dehydrogenase (Helicobacter hepaticus (strain ATCC 51449 / 3B1)).